A 529-amino-acid polypeptide reads, in one-letter code: GMP synthase [glutamine-hydrolyzing] (529 aa).

The Glutamine amidotransferase type-1 domain maps to 16 to 205; sequence PVLVVDFGAQ…LHDFAGLDAD (190 aa). Cysteine 93 (nucleophile) is an active-site residue. Catalysis depends on residues histidine 179 and glutamate 181. A GMPS ATP-PPase domain is found at 206–403; the sequence is WTAANIAGVL…LDLPEEIVAR (198 aa). 233 to 239 is an ATP binding site; sequence SGGVDSA.

Homodimer.

It catalyses the reaction XMP + L-glutamine + ATP + H2O = GMP + L-glutamate + AMP + diphosphate + 2 H(+). It functions in the pathway purine metabolism; GMP biosynthesis; GMP from XMP (L-Gln route): step 1/1. Its function is as follows. Catalyzes the synthesis of GMP from XMP. The sequence is that of GMP synthase [glutamine-hydrolyzing] from Mycobacterium leprae (strain Br4923).